The primary structure comprises 215 residues: Pyrrolidone-carboxylate peptidase 1 (215 aa).

Active-site residues include glutamate 80, cysteine 143, and histidine 167.

It belongs to the peptidase C15 family. In terms of assembly, homotetramer.

The protein resides in the cytoplasm. The enzyme catalyses Release of an N-terminal pyroglutamyl group from a polypeptide, the second amino acid generally not being Pro.. Functionally, removes 5-oxoproline from various penultimate amino acid residues except L-proline. This chain is Pyrrolidone-carboxylate peptidase 1, found in Ralstonia nicotianae (strain ATCC BAA-1114 / GMI1000) (Ralstonia solanacearum).